The sequence spans 352 residues: Molybdenum import ATP-binding protein ModC (352 aa).

The ABC transporter domain maps to 1–229; sequence MLQLDFHQQL…SALRPWLPKD (229 aa). 31-38 contributes to the ATP binding site; sequence GVSGAGKT. Positions 289–352 constitute a Mop domain; it reads KSSIRNVLRA…AQIKSVSITA (64 aa).

It belongs to the ABC transporter superfamily. Molybdate importer (TC 3.A.1.8) family. The complex is composed of two ATP-binding proteins (ModC), two transmembrane proteins (ModB) and a solute-binding protein (ModA).

It is found in the cell inner membrane. It carries out the reaction molybdate(out) + ATP + H2O = molybdate(in) + ADP + phosphate + H(+). Part of the ABC transporter complex ModABC involved in molybdenum import. Responsible for energy coupling to the transport system. The polypeptide is Molybdenum import ATP-binding protein ModC (Pectobacterium atrosepticum (strain SCRI 1043 / ATCC BAA-672) (Erwinia carotovora subsp. atroseptica)).